The primary structure comprises 134 residues: Profilin-2 (134 aa).

Residues C13 and C118 are joined by a disulfide bond. Positions 84–100 (AVIRGKKGSGGITIKKT) match the Involved in PIP2 interaction motif. T114 bears the Phosphothreonine mark.

Belongs to the profilin family. In terms of assembly, occurs in many kinds of cells as a complex with monomeric actin in a 1:1 ratio. In terms of processing, phosphorylated by MAP kinases.

The protein resides in the cytoplasm. It localises to the cytoskeleton. Functionally, binds to actin and affects the structure of the cytoskeleton. At high concentrations, profilin prevents the polymerization of actin, whereas it enhances it at low concentrations. The chain is Profilin-2 from Olea europaea (Common olive).